Reading from the N-terminus, the 176-residue chain is NADH:riboflavin 5'-phosphate oxidoreductase (176 aa).

In terms of biological role, provides the reduced form of flavin mononucleotide for the PIIA synthase reaction. This Streptomyces pristinaespiralis protein is NADH:riboflavin 5'-phosphate oxidoreductase (snaC).